We begin with the raw amino-acid sequence, 152 residues long: Dehydratase aurZ (152 aa).

An EthD domain is found at 34–129 (PSLSEKEYRH…APDHVNFADT (96 aa)).

This sequence belongs to the tpcK family.

The enzyme catalyses naphtopyrone YWA1 = norrubrofusarin + H2O + H(+). It functions in the pathway pigment biosynthesis. Its function is as follows. Dehydratase; part of the gene cluster that mediates the biosynthesis of aurofusarin, a red mycelium pigment which is acting as a mycotoxin. The first step is performed by the polyketide synthase which condenses one acetyl-CoA and 6 malonyl-CoA units to form the first intermediate, the cyclic heptaketide and yellow pigment YWA1. The C2 hydroxyl group in the pyrone ring of YWA1 is probably formed during ring closure by an aldol-type cyclization reaction. The dehydratase aurZ then acts as the first tailoring enzyme in the aurofusarin biosynthetic pathway by converting YWA1 to nor-rubrofusarin. Nor-rubrofusarin is then methylated to rubrofusarin by the O-methyltransferase aurJ. Rubrofusarin is then transported across the plasma membrane by the rubrofusarin-specific pump aurT for further enzymatic processing by the extracellular complex composed of GIP1, aurF, aurO and aurS to yield aurofusarin. The sequence is that of Dehydratase aurZ from Gibberella zeae (strain ATCC MYA-4620 / CBS 123657 / FGSC 9075 / NRRL 31084 / PH-1) (Wheat head blight fungus).